The following is a 440-amino-acid chain: Xylose isomerase (440 aa).

Active-site residues include histidine 101 and aspartate 104. Residues glutamate 232, glutamate 268, histidine 271, aspartate 296, aspartate 307, aspartate 309, and aspartate 339 each coordinate Mg(2+).

Belongs to the xylose isomerase family. As to quaternary structure, homotetramer. It depends on Mg(2+) as a cofactor.

The protein localises to the cytoplasm. It carries out the reaction alpha-D-xylose = alpha-D-xylulofuranose. This is Xylose isomerase from Salmonella agona (strain SL483).